We begin with the raw amino-acid sequence, 121 residues long: Large ribosomal subunit protein uL18 (121 aa).

This sequence belongs to the universal ribosomal protein uL18 family. In terms of assembly, part of the 50S ribosomal subunit; part of the 5S rRNA/L5/L18/L25 subcomplex. Contacts the 5S and 23S rRNAs.

This is one of the proteins that bind and probably mediate the attachment of the 5S RNA into the large ribosomal subunit, where it forms part of the central protuberance. The sequence is that of Large ribosomal subunit protein uL18 from Burkholderia mallei (strain NCTC 10247).